A 1444-amino-acid polypeptide reads, in one-letter code: Probable serine/threonine-protein kinase irlC (1444 aa).

The disordered stretch occupies residues 335–370 (TLINNNNNNNNNNNNNNNNNNNNNNNNNNNNNNNSK). Over residues 338–368 (NNNNNNNNNNNNNNNNNNNNNNNNNNNNNNN) the composition is skewed to low complexity. Residues 495–529 (FTFYLSFGEIFTCSCEDYKREFSCKHMFFILLNYY) form an SWIM-type zinc finger. The segment covering 584–613 (TSPFQSINNNNNNNLNNNNNNNLNNNNNNE) has biased composition (low complexity). Disordered regions lie at residues 584 to 619 (TSPF…NKFK) and 864 to 938 (QKEK…ITPI). 2 coiled-coil regions span residues 593–620 (NNNN…KFKE) and 847–879 (IKAE…KSKI). Residues 864–876 (QKEKKKQKQKQSK) show a composition bias toward basic residues. Residues 885-937 (SSSSSSSSSPSTSNTTITSTTPTTTTTTTTTTTPTTTTTTTTTSSPKQKPITP) are compositionally biased toward low complexity. The Protein kinase domain maps to 981 to 1246 (RKEENVLGRG…IEKILLHPFF (266 aa)). ATP contacts are provided by residues 987 to 995 (LGRGSNGTL) and K1010. D1116 (proton acceptor) is an active-site residue. The KEN domain occupies 1279 to 1444 (NYQEINLKNN…LIYFNDLIIK (166 aa)).

The protein belongs to the protein kinase superfamily. Ser/Thr protein kinase family.

It carries out the reaction L-seryl-[protein] + ATP = O-phospho-L-seryl-[protein] + ADP + H(+). The catalysed reaction is L-threonyl-[protein] + ATP = O-phospho-L-threonyl-[protein] + ADP + H(+). In Dictyostelium discoideum (Social amoeba), this protein is Probable serine/threonine-protein kinase irlC (irlC).